Consider the following 141-residue polypeptide: Galactose-6-phosphate isomerase subunit LacA (141 aa).

The protein belongs to the LacAB/RpiB family. As to quaternary structure, heteromultimeric protein consisting of LacA and LacB.

The enzyme catalyses aldehydo-D-galactose 6-phosphate = keto-D-tagatose 6-phosphate. Its pathway is carbohydrate metabolism; D-galactose 6-phosphate degradation; D-tagatose 6-phosphate from D-galactose 6-phosphate: step 1/1. The protein is Galactose-6-phosphate isomerase subunit LacA of Streptococcus pneumoniae (strain P1031).